Consider the following 362-residue polypeptide: uncharacterized protein (362 aa).

Disordered stretches follow at residues 1–117 (MASK…GLNR), 153–172 (SSAP…GIRK), and 210–266 (RHFD…SSSN). Basic and acidic residues predominate over residues 12 to 23 (AKKEKEIKKEIE). The segment covering 51 to 70 (ENDDTDGDGKEEDAQKEDDI) has biased composition (acidic residues). Composition is skewed to low complexity over residues 100–112 (NSPP…TRNT), 153–167 (SSAP…GSPS), and 241–265 (VPPS…TSSS).

This is an uncharacterized protein from Caenorhabditis elegans.